Consider the following 142-residue polypeptide: Transcriptional regulator MraZ (142 aa).

SpoVT-AbrB domains lie at 5–47 and 76–119; these read EFQH…PQHE and ATEC…SKEE.

The protein belongs to the MraZ family. In terms of assembly, forms oligomers.

The protein localises to the cytoplasm. Its subcellular location is the nucleoid. In Desulforamulus reducens (strain ATCC BAA-1160 / DSM 100696 / MI-1) (Desulfotomaculum reducens), this protein is Transcriptional regulator MraZ.